The following is a 524-amino-acid chain: GMP synthase [glutamine-hydrolyzing] (524 aa).

A Glutamine amidotransferase type-1 domain is found at 9–207; the sequence is RILILDFGSQ…VIHICQCIPN (199 aa). C86 acts as the Nucleophile in catalysis. Catalysis depends on residues H181 and E183. In terms of domain architecture, GMPS ATP-PPase spans 208-399; sequence WTTKHIIEDS…LGLPADLIYR (192 aa). Residue 235 to 241 coordinates ATP; that stretch reads SGGVDSA.

Homodimer.

The enzyme catalyses XMP + L-glutamine + ATP + H2O = GMP + L-glutamate + AMP + diphosphate + 2 H(+). The protein operates within purine metabolism; GMP biosynthesis; GMP from XMP (L-Gln route): step 1/1. Functionally, catalyzes the synthesis of GMP from XMP. In Coxiella burnetii (strain RSA 331 / Henzerling II), this protein is GMP synthase [glutamine-hydrolyzing].